We begin with the raw amino-acid sequence, 69 residues long: MKRIWVSLMIAITACSAHAKRVTCKHFATQAEAQAYMEKYKAYHLDGDHDGEACECLLGGSSHGLARCR.

A signal peptide spans 1–19 (MKRIWVSLMIAITACSAHA).

This is an uncharacterized protein from Pasteurella multocida (strain Pm70).